A 217-amino-acid polypeptide reads, in one-letter code: Peptide methionine sulfoxide reductase MsrA (217 aa).

Cys56 is an active-site residue.

This sequence belongs to the MsrA Met sulfoxide reductase family.

It catalyses the reaction L-methionyl-[protein] + [thioredoxin]-disulfide + H2O = L-methionyl-(S)-S-oxide-[protein] + [thioredoxin]-dithiol. The catalysed reaction is [thioredoxin]-disulfide + L-methionine + H2O = L-methionine (S)-S-oxide + [thioredoxin]-dithiol. In terms of biological role, has an important function as a repair enzyme for proteins that have been inactivated by oxidation. Catalyzes the reversible oxidation-reduction of methionine sulfoxide in proteins to methionine. The protein is Peptide methionine sulfoxide reductase MsrA of Corynebacterium glutamicum (strain R).